The following is a 181-amino-acid chain: MSDDQSPSPSGEPTAMDLVRRTLEEARAAARAQGKDAGRGRAAAPTPRRVAGQRRSWSGPGPDARDPQPLGRLARDLARKRGWSAQVAEGTVLGNWTAVVGHQIADHAVPTGLRDGVLSVSAESTAWATQLRMMQAQLLAKIAAAVGNGVVTSLKITGPAAPSWRKGPRHIAGRGPRDTYG.

Residues 1–11 show a composition bias toward polar residues; sequence MSDDQSPSPSG. Disordered regions lie at residues 1 to 70 and 161 to 181; these read MSDD…PQPL and APSW…DTYG. The span at 18–39 shows a compositional bias: basic and acidic residues; it reads LVRRTLEEARAAARAQGKDAGR. Low complexity predominate over residues 40–50; sequence GRAAAPTPRRV.

Belongs to the UPF0232 family.

The protein is UPF0232 protein MAP_0004 of Mycolicibacterium paratuberculosis (strain ATCC BAA-968 / K-10) (Mycobacterium paratuberculosis).